Reading from the N-terminus, the 229-residue chain is 2-C-methyl-D-erythritol 4-phosphate cytidylyltransferase (229 aa).

Belongs to the IspD/TarI cytidylyltransferase family. IspD subfamily. In terms of assembly, homodimer.

It catalyses the reaction 2-C-methyl-D-erythritol 4-phosphate + CTP + H(+) = 4-CDP-2-C-methyl-D-erythritol + diphosphate. It functions in the pathway isoprenoid biosynthesis; isopentenyl diphosphate biosynthesis via DXP pathway; isopentenyl diphosphate from 1-deoxy-D-xylulose 5-phosphate: step 2/6. Its function is as follows. Catalyzes the formation of 4-diphosphocytidyl-2-C-methyl-D-erythritol from CTP and 2-C-methyl-D-erythritol 4-phosphate (MEP). The polypeptide is 2-C-methyl-D-erythritol 4-phosphate cytidylyltransferase (Wigglesworthia glossinidia brevipalpis).